Here is a 200-residue protein sequence, read N- to C-terminus: Small ribosomal subunit protein eS8A (200 aa).

A disordered region spans residues 1–31 (MGISRDSRHKRSATGAKRAQFRKKRKFELGR). At Thr-62 the chain carries Phosphothreonine. Phosphoserine is present on residues Ser-66, Ser-69, Ser-73, and Ser-86. The residue at position 107 (Thr-107) is a Phosphothreonine. Phosphoserine is present on residues Ser-154, Ser-155, Ser-158, and Ser-161.

This sequence belongs to the eukaryotic ribosomal protein eS8 family. Component of the small ribosomal subunit (SSU). Mature yeast ribosomes consist of a small (40S) and a large (60S) subunit. The 40S small subunit contains 1 molecule of ribosomal RNA (18S rRNA) and 33 different proteins (encoded by 57 genes). The large 60S subunit contains 3 rRNA molecules (25S, 5.8S and 5S rRNA) and 46 different proteins (encoded by 81 genes).

The protein resides in the cytoplasm. Component of the ribosome, a large ribonucleoprotein complex responsible for the synthesis of proteins in the cell. The small ribosomal subunit (SSU) binds messenger RNAs (mRNAs) and translates the encoded message by selecting cognate aminoacyl-transfer RNA (tRNA) molecules. The large subunit (LSU) contains the ribosomal catalytic site termed the peptidyl transferase center (PTC), which catalyzes the formation of peptide bonds, thereby polymerizing the amino acids delivered by tRNAs into a polypeptide chain. The nascent polypeptides leave the ribosome through a tunnel in the LSU and interact with protein factors that function in enzymatic processing, targeting, and the membrane insertion of nascent chains at the exit of the ribosomal tunnel. The sequence is that of Small ribosomal subunit protein eS8A from Saccharomyces cerevisiae (strain ATCC 204508 / S288c) (Baker's yeast).